We begin with the raw amino-acid sequence, 127 residues long: Glycine cleavage system H protein (127 aa).

Residues 22–104 enclose the Lipoyl-binding domain; that stretch reads KVRIGITDFA…YEKAWMIVIE (83 aa). K63 carries the N6-lipoyllysine modification.

The protein belongs to the GcvH family. The glycine cleavage system is composed of four proteins: P, T, L and H. (R)-lipoate is required as a cofactor.

The glycine cleavage system catalyzes the degradation of glycine. The H protein shuttles the methylamine group of glycine from the P protein to the T protein. In terms of biological role, is also involved in protein lipoylation via its role as an octanoyl/lipoyl carrier protein intermediate. This chain is Glycine cleavage system H protein, found in Geobacillus thermodenitrificans (strain NG80-2).